The sequence spans 223 residues: MDTARVYLSLKPSKTAAGAQCVSPPSLPPDACRCPRSHRLALKLSCAGLILLVLALVGMSILVRVLVQKPSVEPCRVLIQENLSKTGSPAKLKCPKDWLSHRDKCFHVSQTSITWKESLADCGGKGATLLLVQDQEELRFLRNLTKRISSSFWIGLSYTLSDENWKWINGSTLNSDVLSITGDTEKDSCASVSQDKVLSESCDSDNIWVCQKELKCECMCNDS.

Over 1-43 the chain is Cytoplasmic; it reads MDTARVYLSLKPSKTAAGAQCVSPPSLPPDACRCPRSHRLALK. The LCK-binding motif signature appears at 32–35; it reads CRCP. A helical; Signal-anchor for type II membrane protein membrane pass occupies residues 44–63; it reads LSCAGLILLVLALVGMSILV. At 64 to 223 the chain is on the extracellular side; that stretch reads RVLVQKPSVE…LKCECMCNDS (160 aa). The C-type lectin domain maps to 93-212; sequence KCPKDWLSHR…DSDNIWVCQK (120 aa). Disulfide bonds link C94–C105, C122–C210, and C189–C202.

Homodimer; disulfide-linked. Interacts with tyrosine kinase LCK. In terms of tissue distribution, expressed in natural killer cells.

The protein localises to the membrane. Its function is as follows. Plays a stimulatory role on natural killer (NK) cell cytotoxicity. This is Killer cell lectin-like receptor subfamily B member 1A (Klrb1a) from Rattus norvegicus (Rat).